A 129-amino-acid polypeptide reads, in one-letter code: MAKGRGSASWSARAIVTLMAVSVLLLQADYVQAATYTVGDSGIWTFNAVGWPKGKHFRAGDVLVFNYNPRMHNVVKVDSGSYNNCKTPTGAKPYTSGKDRITLSKGQNFFICNFPNHCESDMKIAVTAV.

Positions 1–33 (MAKGRGSASWSARAIVTLMAVSVLLLQADYVQA) are cleaved as a signal peptide. Positions 34–129 (ATYTVGDSGI…SDMKIAVTAV (96 aa)) constitute a Phytocyanin domain. Residues H72, C112, H117, and M122 each contribute to the Cu cation site. C85 and C118 form a disulfide bridge.

As to expression, expressed in the inflorescence and in the transmitting tract of the pistil. Detected in roots, stems, cauline leaves, cotyledons, hypocotyls, guard cells, pistils, sepals, stamen filaments and vascular bundles of roots but not of leaves. Not expressed in petals, anthers or pollen.

The protein resides in the secreted. Its subcellular location is the extracellular space. It localises to the extracellular matrix. Its function is as follows. Forms a concentration gradient along the pollen tube growth path, with a lower level in the stigma papilla cell wall and a higher level in the transmitting tract extracellular matix of the style. This is Basic blue protein (ARPN) from Arabidopsis thaliana (Mouse-ear cress).